A 79-amino-acid polypeptide reads, in one-letter code: Small ribosomal subunit protein bS20 (79 aa).

It belongs to the bacterial ribosomal protein bS20 family.

Functionally, binds directly to 16S ribosomal RNA. In Karelsulcia muelleri (strain GWSS) (Sulcia muelleri), this protein is Small ribosomal subunit protein bS20.